The primary structure comprises 419 residues: Multifunctional CCA protein (419 aa).

Glycine 8 and arginine 11 together coordinate ATP. CTP is bound by residues glycine 8 and arginine 11. Positions 21 and 23 each coordinate Mg(2+). The ATP site is built by arginine 91, arginine 149, and arginine 152. CTP is bound by residues arginine 91, arginine 149, and arginine 152. The HD domain occupies 238–339; it reads CGVHLMMVID…VRLLERCDAF (102 aa).

Belongs to the tRNA nucleotidyltransferase/poly(A) polymerase family. Bacterial CCA-adding enzyme type 1 subfamily. Monomer. Can also form homodimers and oligomers. Mg(2+) is required as a cofactor. It depends on Ni(2+) as a cofactor.

The catalysed reaction is a tRNA precursor + 2 CTP + ATP = a tRNA with a 3' CCA end + 3 diphosphate. It catalyses the reaction a tRNA with a 3' CCA end + 2 CTP + ATP = a tRNA with a 3' CCACCA end + 3 diphosphate. Catalyzes the addition and repair of the essential 3'-terminal CCA sequence in tRNAs without using a nucleic acid template. Adds these three nucleotides in the order of C, C, and A to the tRNA nucleotide-73, using CTP and ATP as substrates and producing inorganic pyrophosphate. tRNA 3'-terminal CCA addition is required both for tRNA processing and repair. Also involved in tRNA surveillance by mediating tandem CCA addition to generate a CCACCA at the 3' terminus of unstable tRNAs. While stable tRNAs receive only 3'-terminal CCA, unstable tRNAs are marked with CCACCA and rapidly degraded. The chain is Multifunctional CCA protein from Variovorax paradoxus (strain S110).